Reading from the N-terminus, the 295-residue chain is MAVSSTPWALVALFLMASSTVMAIPPRKAIDVPFGRNYVPTWAFDHQKQLNGGSELQLILDKYTGTGFQSKGSYLFGHFSMHIKLPAGDTAGVVTAFYLSSTNNEHDEIDFEFLGNRTGQPVILQTNVFTGGKGNREQRIYLWFDPSKAYHTYSVLWNLYQIVFFVDNIPIRVFKNAKDLGVRFPFNQPMKLYSSLWNADDWATRGGLEKTNWANAPFIASYRGFHIDGCQASVEAKYCATQGRMWWDQNEFRDLDAEQYRRLKWVRMKWTIYNYCTDRTRFPVMPAECRRDRDV.

The N-terminal stretch at 1 to 23 (MAVSSTPWALVALFLMASSTVMA) is a signal peptide. Residues 25-222 (PPRKAIDVPF…WANAPFIASY (198 aa)) form the GH16 domain. Glu108 serves as the catalytic Nucleophile. Catalysis depends on Glu112, which acts as the Proton donor. A xyloglucan-binding site is contributed by Glu112. Asn116 is a glycosylation site (N-linked (GlcNAc...) asparagine). Residues 125 to 127 (QTN), 135 to 137 (NRE), 201 to 202 (DW), and Gly206 each bind xyloglucan. 2 disulfide bridges follow: Cys230/Cys239 and Cys276/Cys289. Arg281 is a xyloglucan binding site.

It belongs to the glycosyl hydrolase 16 family. XTH group 1 subfamily. In terms of processing, contains at least one intrachain disulfide bond essential for its enzymatic activity. The N-glycan consists of an (GlcNAc)2(Hex)6 oligosaccharide; not essential for its enzymatic activity.

The protein localises to the secreted. It localises to the cell wall. The protein resides in the extracellular space. It is found in the apoplast. The catalysed reaction is breaks a beta-(1-&gt;4) bond in the backbone of a xyloglucan and transfers the xyloglucanyl segment on to O-4 of the non-reducing terminal glucose residue of an acceptor, which can be a xyloglucan or an oligosaccharide of xyloglucan.. In terms of biological role, catalyzes xyloglucan endohydrolysis (XEH) and/or endotransglycosylation (XET). Cleaves and religates xyloglucan polymers, an essential constituent of the primary cell wall, and thereby participates in cell wall construction of growing tissues. The protein is Xyloglucan endotransglucosylase/hydrolase (XET16A) of Brassica oleracea var. botrytis (Cauliflower).